We begin with the raw amino-acid sequence, 948 residues long: UvrABC system protein A (948 aa).

33–40 (GLSGSGKS) serves as a coordination point for ATP. The C4-type zinc-finger motif lies at 252–279 (CPICGFSIGELEPRMFSFNSPFGACPTC). 2 consecutive ABC transporter domains span residues 309-587 (WIPT…KKSL) and 607-935 (ASDR…KYLK). An ATP-binding site is contributed by 639-646 (GVSGSGKS). The C4-type zinc finger occupies 738-764 (CEACKGDGIIKIEMHFLPDVYVPCEVC).

This sequence belongs to the ABC transporter superfamily. UvrA family. As to quaternary structure, forms a heterotetramer with UvrB during the search for lesions.

Its subcellular location is the cytoplasm. In terms of biological role, the UvrABC repair system catalyzes the recognition and processing of DNA lesions. UvrA is an ATPase and a DNA-binding protein. A damage recognition complex composed of 2 UvrA and 2 UvrB subunits scans DNA for abnormalities. When the presence of a lesion has been verified by UvrB, the UvrA molecules dissociate. This chain is UvrABC system protein A, found in Staphylococcus aureus (strain N315).